The chain runs to 276 residues: MLMITSFANPRVAQAFVDYMATQGVILTIQQHNQSDVWLADESQAERVRAELARFLENPADPRYLAASWQAGHTGSGLHYRRYPFFAALRERAGPVTWVVMIACVVVFIAMQILGDQEVMLWLAWPFDPTLKFEFWRYFTHALMHFSLMHILFNLLWWWYLGGAVEKRLGSGKLIVITLISALLSGYVQQKFSGPWFGGLSGVVYALMGYVWLRGERDPQSGIYLQRGLIIFALIWIVAGWFDLFGMSMANGAHIAGLAVGLAMAFVDSLNARKRK.

The next 6 helical transmembrane spans lie at 94–114 (GPVT…MQIL), 142–162 (ALMH…WYLG), 169–189 (LGSG…GYVQ), 192–212 (FSGP…GYVW), 229–249 (LIIF…GMSM), and 250–270 (ANGA…VDSL). The active-site Nucleophile is the Ser201. The active site involves His254.

It belongs to the peptidase S54 family.

It localises to the cell inner membrane. It catalyses the reaction Cleaves type-1 transmembrane domains using a catalytic dyad composed of serine and histidine that are contributed by different transmembrane domains.. Rhomboid-type serine protease that catalyzes intramembrane proteolysis. The polypeptide is Rhomboid protease GlpG (Escherichia coli (strain 55989 / EAEC)).